An 860-amino-acid polypeptide reads, in one-letter code: DNA mismatch repair protein MutS (860 aa).

621-628 contacts ATP; that stretch reads GPNMGGKS.

Belongs to the DNA mismatch repair MutS family.

Its function is as follows. This protein is involved in the repair of mismatches in DNA. It is possible that it carries out the mismatch recognition step. This protein has a weak ATPase activity. The chain is DNA mismatch repair protein MutS from Salmonella arizonae (strain ATCC BAA-731 / CDC346-86 / RSK2980).